A 209-amino-acid polypeptide reads, in one-letter code: Large ribosomal subunit protein uL3 (209 aa).

Positions 133–153 (THGNSLSHRVPGSIGQNQTPG) are disordered. N5-methylglutamine is present on Q150.

The protein belongs to the universal ribosomal protein uL3 family. Part of the 50S ribosomal subunit. Forms a cluster with proteins L14 and L19. Methylated by PrmB.

Functionally, one of the primary rRNA binding proteins, it binds directly near the 3'-end of the 23S rRNA, where it nucleates assembly of the 50S subunit. The sequence is that of Large ribosomal subunit protein uL3 from Serratia proteamaculans (strain 568).